The primary structure comprises 276 residues: Pyrroline-5-carboxylate reductase (276 aa).

The protein belongs to the pyrroline-5-carboxylate reductase family.

The protein resides in the cytoplasm. The enzyme catalyses L-proline + NADP(+) = (S)-1-pyrroline-5-carboxylate + NADPH + 2 H(+). The catalysed reaction is L-proline + NAD(+) = (S)-1-pyrroline-5-carboxylate + NADH + 2 H(+). It functions in the pathway amino-acid biosynthesis; L-proline biosynthesis; L-proline from L-glutamate 5-semialdehyde: step 1/1. The polypeptide is Pyrroline-5-carboxylate reductase (PROC1) (Arabidopsis thaliana (Mouse-ear cress)).